A 100-amino-acid chain; its full sequence is Vesicle-associated membrane protein 8 (100 aa).

N-acetylmethionine is present on methionine 1. The Cytoplasmic portion of the chain corresponds to methionine 1–lysine 75. Serine 5 and serine 18 each carry phosphoserine. The v-SNARE coiled-coil homology domain maps to arginine 12–lysine 72. Threonine 28, threonine 48, and threonine 54 each carry phosphothreonine. Serine 55 carries the post-translational modification Phosphoserine. Residues lysine 64 and lysine 68 are each lipidated ((Microbial infection) N6-stearoyl lysine). A helical; Anchor for type IV membrane protein membrane pass occupies residues methionine 76–threonine 96. At glycine 97–serine 100 the chain is on the vesicular side.

The protein belongs to the synaptobrevin family. In terms of assembly, forms a SNARE complex composed of VAMP8, SNAP29 and STX17 involved in fusion of autophagosome with lysosome. Found in a number of SNARE complexes with NAPA, SNAP23, SNAP25, STX1A, STX4, STX7, STX8 and VTI1B. Interacts with PICALM. SNARE complex formation and binding by PICALM are mutually exclusive processes for VAMP8. Interacts with SBF2/MTMR13. Interacts with RAB21 (in GTP-bound form) in response to starvation; the interaction probably regulates VAMP8 endolysosomal trafficking. Interacts with STX17; this interaction is increased in the absence of TMEM39A. Interacts with TRIM6. (Microbial infection) The interaction with STX17 is decreased in presence of SARS coronavirus-2/SARS-CoV-2 ORF3A protein. In terms of processing, (Microbial infection) Stearoylated By S.flexneri N-epsilon-fatty acyltransferase IcsB, thereby disrupting the host actin cytoskeleton. In terms of tissue distribution, platelets.

The protein resides in the lysosome membrane. It localises to the early endosome membrane. It is found in the late endosome membrane. The protein localises to the cell membrane. Its subcellular location is the zymogen granule membrane. Functionally, SNAREs, soluble N-ethylmaleimide-sensitive factor-attachment protein receptors, are essential proteins for fusion of cellular membranes. SNAREs localized on opposing membranes assemble to form a trans-SNARE complex, an extended, parallel four alpha-helical bundle that drives membrane fusion. VAMP8 is a SNARE involved in autophagy through the direct control of autophagosome membrane fusion with the lysososome membrane via its interaction with the STX17-SNAP29 binary t-SNARE complex. Also required for dense-granule secretion in platelets. Also plays a role in regulated enzyme secretion in pancreatic acinar cells. Involved in the abscission of the midbody during cell division, which leads to completely separate daughter cells. Involved in the homotypic fusion of early and late endosomes. Also participates in the activation of type I interferon antiviral response through a TRIM6-dependent mechanism. The polypeptide is Vesicle-associated membrane protein 8 (Homo sapiens (Human)).